The chain runs to 493 residues: Cysteine--tRNA ligase (493 aa).

A Zn(2+)-binding site is contributed by Cys29. The 'HIGH' region motif lies at 31-41 (VTVYDYCHIGH). 3 residues coordinate Zn(2+): Cys209, His234, and Glu238. Residues 266-270 (KMSKS) carry the 'KMSKS' region motif. ATP is bound at residue Lys269.

The protein belongs to the class-I aminoacyl-tRNA synthetase family. In terms of assembly, monomer. Zn(2+) serves as cofactor.

The protein resides in the cytoplasm. It carries out the reaction tRNA(Cys) + L-cysteine + ATP = L-cysteinyl-tRNA(Cys) + AMP + diphosphate. The sequence is that of Cysteine--tRNA ligase from Pelobacter propionicus (strain DSM 2379 / NBRC 103807 / OttBd1).